We begin with the raw amino-acid sequence, 492 residues long: ATP synthase subunit beta, chloroplastic (492 aa).

An ATP-binding site is contributed by 170-177 (GGAGVGKT).

Belongs to the ATPase alpha/beta chains family. F-type ATPases have 2 components, CF(1) - the catalytic core - and CF(0) - the membrane proton channel. CF(1) has five subunits: alpha(3), beta(3), gamma(1), delta(1), epsilon(1). CF(0) has four main subunits: a(1), b(1), b'(1) and c(9-12).

Its subcellular location is the plastid. It localises to the chloroplast thylakoid membrane. The enzyme catalyses ATP + H2O + 4 H(+)(in) = ADP + phosphate + 5 H(+)(out). Its function is as follows. Produces ATP from ADP in the presence of a proton gradient across the membrane. The catalytic sites are hosted primarily by the beta subunits. This Angiopteris evecta (Mule's foot fern) protein is ATP synthase subunit beta, chloroplastic.